The chain runs to 770 residues: ARF GTPase-activating protein GIT1 (770 aa).

Residues 1–124 (MSRKGPRAEV…AFVHKLPCRD (124 aa)) enclose the Arf-GAP domain. Positions 1-124 (MSRKGPRAEV…AFVHKLPCRD (124 aa)) are interaction with gamma-tubulin and localization to the centrosome. The segment at 11–34 (CADCSAPDPGWASISRGVLVCDEC) adopts a C4-type zinc-finger fold. ANK repeat units follow at residues 132-161 (DLSK…QANF), 166-195 (KGTT…DPGS), and 199-228 (NGRT…ELTD). Tyr-224 bears the Phosphotyrosine mark. Residues 245-374 (HYIIPQMADR…QGKSLSSPTD (130 aa)) are interaction with PCLO. Residues 253 to 424 (DRSRQKCMSQ…NRARSMDSSD (172 aa)) are interaction with PTK2/FAK1. The interaction with ARHGEF7 stretch occupies residues 254 to 376 (RSRQKCMSQS…KSLSSPTDNL (123 aa)). The interval 363–425 (RQQGKSLSSP…RARSMDSSDL (63 aa)) is disordered. Residues 366 to 383 (GKSLSSPTDNLELSARNQ) show a composition bias toward polar residues. Phosphoserine is present on residues Ser-368 and Ser-371. A Phosphothreonine modification is found at Thr-373. Residues 375-596 (NLELSARNQS…QEGSRHASKL (222 aa)) are interaction with NCK2 and GRIN3A. The segment at 375–596 (NLELSARNQS…QEGSRHASKL (222 aa)) is required for localization at synapses. Phosphoserine is present on residues Ser-379 and Ser-384. Tyr-392 carries the phosphotyrosine modification. Residues Ser-394 and Ser-397 each carry the phosphoserine modification. Over residues 394–403 (SVASDEDTDQ) the composition is skewed to acidic residues. Thr-401 is modified (phosphothreonine). Ser-419, Ser-422, and Ser-426 each carry phosphoserine. Positions 420 to 475 (MDSSDLSDGAVTLQEYLELKKALATSEAKVQQLMKVNSSLSDELRKLQREIHKLQA) are interaction with MAPK1. Residues 429–629 (AVTLQEYLEL…EGKRFLELSK (201 aa)) form an interaction with IKBKG region. Positions 449–483 (VQQLMKVNSSLSDELRKLQREIHKLQAENLQLRQP) form a coiled coil. Ser-507 and Ser-545 each carry phosphoserine. At Thr-546 the chain carries Phosphothreonine. 2 positions are modified to phosphotyrosine: Tyr-554 and Tyr-563. Phosphoserine is present on residues Ser-570, Ser-580, Ser-601, and Ser-605. The segment covering 574–586 (VTFTPSSPLLSSS) has biased composition (low complexity). The segment at 574-615 (VTFTPSSPLLSSSQEGSRHASKLSRHGSGAESDYENTQSGEP) is disordered. At Thr-610 the chain carries Phosphothreonine. At Ser-639 the chain carries Phosphoserine. Positions 646-770 (PGLPSTEDVI…VTITTREKKQ (125 aa)) are interaction with PXN and TGFB1I1.

In terms of assembly, forms homodimers and possibly oligomers. May form heterooligomers with GIT2. Interacts with G protein-coupled receptor kinases, including GRK2, GRK3, GRK5 and GRK6. Interacts with PPFIA1, PPFIA2 and PPFIA4. Interacts with GRIP1 and forms a ternary complex with PPFIA1 and GRIP1. Directly interacts with ARHGEF7/beta-PIX, forming in vitro a heptameric complex made of a GIT1 dimer and an ARHGEF7 trimer. Directly interacts with PXN/paxillin; this interaction is enhanced in the presence of ARHGEF7. Directly interacts (via C-terminus) with TGFB1I1/Hic-5 (via LD motif 3). Directly interacts with PTK2/FAK1. May interact with PTK2B/PYK2; this interaction may be indirect. Interacts with AMPA receptors GRIA2/3. Directly interacts with protein Piccolo/PCLO. Forms a complex with Ephrin-B1/EFNB1 and NCK2/GRB4 (via SH2); this interaction is important for spine morphogenesis and synapse formation. Interaction with NCK2 is transient and depends upon GIT1 phosphorylation at Tyr-392. Interacts with GRIN3A/GluN3A (via C-terminus); this interaction competes with GIT1 interaction with ARHGEF7 and limits synaptic localization of GIT1. Interacts with IKBKG/NEMO in resting bone mesenchymal stem cells, as well as in TNF-stimulated cells; this interaction may increase IKBKG affinity for 'Lys-63'-linked polyubiquitin chains. Interacts with GABA(A) receptors, including GABRB3 and GABRG2. Interacts with SCRIB. Interacts (via N- and C-terminus) with ENTR1/SDCCAG3 (via N-terminus); this interaction is direct. May form a tripartite complex with ENTR1 and PTPN13. Interacts with YWHAZ. Interacts with PAK1 and PAK3. Directly interacts (via N-terminus) with gamma-tubulin. Interacts with MAPK1 and MAPK3; this interaction is required for MAPK1/3 recruitment to focal adhesions. In terms of processing, phosphorylated on tyrosine residues by PTK2/FAK1 and SRC in growing fibroblasts. Phosphorylation at Tyr-392 is induced by activation of Ephrin-B1/EFNB1 and catalyzed by SRC family kinases. It is required for the interaction with NCK2 and for GIT1 recruitment to synapses in hippocampal neurons. Widely expressed. Expressed at high levels in testis (at protein level). Expressed in the brain, including in CA1 hippocampal neurons, in the amygdala, and thalamic nuclei (at protein level).

It is found in the cytoplasm. It localises to the synapse. Its subcellular location is the presynapse. The protein localises to the postsynapse. The protein resides in the postsynaptic density. It is found in the cell junction. It localises to the focal adhesion. Its subcellular location is the cell projection. The protein localises to the lamellipodium. The protein resides in the cytoskeleton. It is found in the microtubule organizing center. It localises to the centrosome. Its subcellular location is the spindle pole. GTPase-activating protein for ADP ribosylation factor family members, including ARF1. Multidomain scaffold protein that interacts with numerous proteins and therefore participates in many cellular functions, including receptor internalization, focal adhesion remodeling, and signaling by both G protein-coupled receptors and tyrosine kinase receptors. Through PAK1 activation, positively regulates microtubule nucleation during interphase. Plays a role in the regulation of cytokinesis; for this function, may act in a pathway also involving ENTR1 and PTPN13. May promote cell motility both by regulating focal complex dynamics and by the activation of RAC1. May act as scaffold for MAPK1/3 signal transduction, recruiting MAPK1/3 to focal adhesions after EGF stimulation via a Src-dependent pathway, hence stimulating cell migration. Plays a role in brain development and function. Involved in the regulation of spine density and synaptic plasticity that is required for processes involved in learning. Plays an important role in dendritic spine morphogenesis and synapse formation. In hippocampal neurons, recruits guanine nucleotide exchange factors (GEFs), such as ARHGEF7/beta-PIX, to the synaptic membrane. These in turn locally activate RAC1, which is an essential step for spine morphogenesis and synapse formation. May contribute to the organization of presynaptic active zones through oligomerization and formation of a Piccolo/PCLO-based protein network, which includes ARHGEF7/beta-PIX and FAK1. In neurons, through its interaction with liprin-alpha family members, may be required for AMPA receptor (GRIA2/3) proper targeting to the cell membrane. In complex with GABA(A) receptors and ARHGEF7, plays a crucial role in regulating GABA(A) receptor synaptic stability, maintaining GPHN/gephyrin scaffolds and hence GABAergic inhibitory synaptic transmission, by locally coordinating RAC1 and PAK1 downstream effector activity, leading to F-actin stabilization. May also be important for RAC1 downstream signaling pathway through PAK3 and regulation of neuronal inhibitory transmission at presynaptic input. Required for successful bone regeneration during fracture healing. The function in intramembranous ossification may, at least partly, exerted by macrophages in which GIT1 is a key negative regulator of redox homeostasis, IL1B production, and glycolysis, acting through the ERK1/2/NRF2/NFE2L2 axis. May also play a role in angiogenesis during fracture healing. In this process, may regulate activation of the canonical NF-kappa-B signal in bone mesenchymal stem cells by enhancing the interaction between NEMO and 'Lys-63'-ubiquitinated RIPK1/RIP1, eventually leading to enhanced production of VEGFA and others angiogenic factors. Essential for VEGF signaling through the activation of phospholipase C-gamma and ERK1/2, hence may control endothelial cell proliferation and angiogenesis. This chain is ARF GTPase-activating protein GIT1, found in Rattus norvegicus (Rat).